Consider the following 284-residue polypeptide: Serine/arginine-rich splicing factor RS2Z32 (284 aa).

In terms of domain architecture, RRM spans 11–81; it reads TRLYVGRLSS…SRITVEASRG (71 aa). The interval 74–97 is disordered; sequence ITVEASRGAPRGSRDNGSRGPPPG. 2 consecutive CCHC-type zinc fingers follow at residues 99–116 and 121–138; these read GRCFNCGVDGHWARDCTA and NKCYRCGERGHIERNCKN. The tract at residues 132–284 is disordered; that stretch reads IERNCKNSPS…RPSPKGSESP (153 aa). Residues 159–180 show a composition bias toward basic residues; that stretch reads RSPRRRRSPSRSRSYSRGRSYS. Phosphoserine occurs at positions 166, 168, and 184. Residues 186-203 show a composition bias toward basic and acidic residues; the sequence is VRREKSVEDRSRSPKAME. Residues Ser205, Ser207, Ser214, Ser216, Ser225, Ser235, Ser255, Ser265, Ser277, and Ser281 each carry the phosphoserine modification. The segment covering 209 to 236 has biased composition (basic and acidic residues); that stretch reads KGRDQSLSPDRKVIDASPKRGSDYDGSP.

The protein belongs to the splicing factor SR family. RS2Z subfamily. Component of the spliceosome. Post-translationally, extensively phosphorylated on serine residues in the RS domain.

It is found in the nucleus. In terms of biological role, probably involved in intron recognition and spliceosome assembly. This is Serine/arginine-rich splicing factor RS2Z32 (RS2Z32) from Arabidopsis thaliana (Mouse-ear cress).